The chain runs to 541 residues: Formimidoyltransferase-cyclodeaminase (541 aa).

The segment at 1-181 (MSQLVECVPN…GATVAGARKF (181 aa)) is formiminotransferase N-subdomain. His-82 functions as the For formimidoyltransferase activity in the catalytic mechanism. 163–172 (GPSAFVPSWG) provides a ligand contact to folate. The segment at 182-326 (LLAFNINLLS…PKERIIEYLV (145 aa)) is formiminotransferase C-subdomain. Positions 327-334 (PEAGPEQS) are linker. The segment at 335 to 541 (LLHKPLRTFV…VLDRLEARQA (207 aa)) is cyclodeaminase/cyclohydrolase. Catalysis depends on Asp-412, which acts as the For cyclodeaminase activity. Ser-520 is subject to Phosphoserine.

The protein in the C-terminal section; belongs to the cyclodeaminase/cyclohydrolase family. This sequence in the N-terminal section; belongs to the formiminotransferase family. As to quaternary structure, homooctamer, including four polyglutamate binding sites. The subunits are arranged as a tetramer of dimers, and form a planar ring-shaped structure.

It is found in the cytoplasm. The protein localises to the cytosol. It localises to the golgi apparatus. The protein resides in the cytoskeleton. Its subcellular location is the microtubule organizing center. It is found in the centrosome. The protein localises to the centriole. It catalyses the reaction 5-formimidoyltetrahydrofolate + L-glutamate = N-formimidoyl-L-glutamate + (6S)-5,6,7,8-tetrahydrofolate. It carries out the reaction 5-formimidoyltetrahydrofolate + 2 H(+) = (6R)-5,10-methenyltetrahydrofolate + NH4(+). It functions in the pathway amino-acid degradation; L-histidine degradation into L-glutamate; L-glutamate from N-formimidoyl-L-glutamate (transferase route): step 1/1. Folate-dependent enzyme, that displays both transferase and deaminase activity. Serves to channel one-carbon units from formiminoglutamate to the folate pool. In terms of biological role, binds and promotes bundling of vimentin filaments originating from the Golgi. This is Formimidoyltransferase-cyclodeaminase (FTCD) from Sus scrofa (Pig).